Reading from the N-terminus, the 208-residue chain is Urease accessory protein UreG (208 aa).

Position 12–19 (12–19 (GPVGAGKT)) interacts with GTP.

This sequence belongs to the SIMIBI class G3E GTPase family. UreG subfamily. In terms of assembly, homodimer. UreD, UreF and UreG form a complex that acts as a GTP-hydrolysis-dependent molecular chaperone, activating the urease apoprotein by helping to assemble the nickel containing metallocenter of UreC. The UreE protein probably delivers the nickel.

The protein localises to the cytoplasm. Its function is as follows. Facilitates the functional incorporation of the urease nickel metallocenter. This process requires GTP hydrolysis, probably effectuated by UreG. This is Urease accessory protein UreG from Rhodobacter capsulatus (Rhodopseudomonas capsulata).